A 496-amino-acid polypeptide reads, in one-letter code: Acyltransferase clz6 (496 aa).

The active-site Proton acceptor is H163.

The protein belongs to the plant acyltransferase family. As to quaternary structure, monomer.

It participates in secondary metabolite biosynthesis. Its function is as follows. Acyltransferase; part of the gene cluster that mediates the biosynthesis of squalestatin S1 (SQS1, also known as zaragozic acid A), a heavily oxidized fungal polyketide that offers potent cholesterol lowering activity by targeting squalene synthase (SS). SQS1 is composed of a 2,8-dioxobicyclic[3.2.1]octane-3,4,5-tricarboxyclic acid core that is connected to two lipophilic polyketide arms. These initial steps feature the priming of an unusual benzoic acid starter unit onto the highly reducing polyketide synthase clz14, followed by oxaloacetate extension and product release to generate a tricarboxylic acid containing product. The phenylalanine ammonia lyase (PAL) clz10 and the acyl-CoA ligase clz12 are involved in transforming phenylalanine into benzoyl-CoA. The citrate synthase-like protein clz17 is involved in connecting the C-alpha-carbons of the hexaketide chain and oxaloacetate to afford the tricarboxylic acid unit. The potential hydrolytic enzymes, clz11 and clz13, are in close proximity to pks2 and may participate in product release. On the other side, the tetraketide arm is synthesized by a the squalestatin tetraketide synthase clz2 and enzymatically esterified to the core in the last biosynthetic step, by the acetyltransferase clz6. The biosynthesis of the tetraketide must involve 3 rounds of chain extension. After the first and second rounds methyl-transfer occurs, and in all rounds of extension the ketoreductase and dehydratase are active. The enoyl reductase and C-MeT of clz2 are not active in the final round of extension. The acetyltransferase clz6 appears to have a broad substrate selectivity for its acyl CoA substrate, allowing the in vitro synthesis of novel squalestatins. The biosynthesis of SQS1 requires several oxidative steps likely performed by oxidoreductases clz3, clz15 and clz16. Finally, in support of the identification of the cluster as being responsible for SQS1 production, the cluster contains a gene encoding a putative squalene synthase (SS) clz20, suggesting a likely mechanism for self-resistance. The polypeptide is Acyltransferase clz6 (Cochliobolus lunatus (Filamentous fungus)).